We begin with the raw amino-acid sequence, 229 residues long: Heptaprenylglyceryl phosphate synthase (229 aa).

A sn-glycerol 1-phosphate-binding site is contributed by K12. The Mg(2+) site is built by D14 and S40. Residues 159–164 (YLEYSG), G189, and 209–210 (GN) contribute to the sn-glycerol 1-phosphate site.

Belongs to the GGGP/HepGP synthase family. Group I subfamily. As to quaternary structure, homodimer. It depends on Mg(2+) as a cofactor.

The enzyme catalyses sn-glycerol 1-phosphate + all-trans-heptaprenyl diphosphate = 3-heptaprenyl-sn-glycero-1-phosphate + diphosphate. The protein operates within membrane lipid metabolism; glycerophospholipid metabolism. Functionally, prenyltransferase that catalyzes in vivo the transfer of the heptaprenyl moiety of heptaprenyl pyrophosphate (HepPP; 35 carbon atoms) to the C3 hydroxyl of sn-glycerol-1-phosphate (G1P), producing heptaprenylglyceryl phosphate (HepGP). This reaction is an ether-bond-formation step in the biosynthesis of archaea-type G1P-based membrane lipids found in Bacillales. This chain is Heptaprenylglyceryl phosphate synthase, found in Bacillus cytotoxicus (strain DSM 22905 / CIP 110041 / 391-98 / NVH 391-98).